A 150-amino-acid chain; its full sequence is Aspartate carbamoyltransferase regulatory chain (150 aa).

Zn(2+) is bound by residues cysteine 105, cysteine 110, cysteine 133, and cysteine 136.

It belongs to the PyrI family. In terms of assembly, contains catalytic and regulatory chains. Zn(2+) serves as cofactor.

Its function is as follows. Involved in allosteric regulation of aspartate carbamoyltransferase. The polypeptide is Aspartate carbamoyltransferase regulatory chain (Thermococcus sibiricus (strain DSM 12597 / MM 739)).